Consider the following 202-residue polypeptide: Putative NAD(P)H nitroreductase YodC (202 aa).

FMN is bound by residues 11-13 (RAS), 68-70 (QKQ), 155-156 (GG), and Arg-192.

The protein belongs to the nitroreductase family. It depends on FMN as a cofactor.

The protein localises to the cytoplasm. Putative nitroreductase that may contribute to the degradation of aromatic compounds. In Bacillus subtilis (strain 168), this protein is Putative NAD(P)H nitroreductase YodC (yodC).